A 1939-amino-acid polypeptide reads, in one-letter code: Myosin-1 (1939 aa).

Positions 33–82 (DAKTSVFVAEPKESFVKGTVQSREGGKVTVKTEAGATLTVKEDQVFPMNP) constitute a Myosin N-terminal SH3-like domain. Threonine 64 and threonine 69 each carry phosphothreonine. In terms of domain architecture, Myosin motor spans 86 to 782 (DKIEDMAMMT…LLGLLEEMRD (697 aa)). At lysine 130 the chain carries N6,N6,N6-trimethyllysine. Position 179–186 (179–186 (GESGAGKT)) interacts with ATP. Tyrosine 389 is subject to Phosphotyrosine. Threonine 419 carries the phosphothreonine modification. Tyrosine 424 is modified (phosphotyrosine). The interval 659 to 681 (LNKLMTNLRSTHPHFVRCIIPNE) is actin-binding. Residue histidine 757 is modified to Pros-methylhistidine. Residues 761 to 775 (KFGHTKVFFKAGLLG) form an actin-binding region. Positions 785–814 (LAQLITRTQARCRGFLARVEYQKMVERRES) constitute an IQ domain. The stretch at 843-1939 (LLKSAETEKE…EVHTKIISEE (1097 aa)) forms a coiled coil. Residues serine 1092 and serine 1096 each carry the phosphoserine modification. Disordered regions lie at residues 1125–1147 (EIEA…SREL) and 1153–1172 (RLEE…KKRE). Residues 1128 to 1147 (AERASRAKAEKQRSDLSREL) show a composition bias toward basic and acidic residues. Serine 1162 and serine 1237 each carry phosphoserine. Threonine 1241 carries the post-translational modification Phosphothreonine. Position 1243 is a phosphoserine (serine 1243). Position 1255 is a phosphothreonine (threonine 1255). Position 1261 is a phosphoserine (serine 1261). 2 positions are modified to phosphothreonine: threonine 1265 and threonine 1286. 4 positions are modified to phosphoserine: serine 1288, serine 1292, serine 1303, and serine 1306. Phosphotyrosine is present on tyrosine 1464. Threonine 1467 bears the Phosphothreonine mark. Phosphoserine is present on serine 1474. A Phosphotyrosine modification is found at tyrosine 1492. Residue serine 1495 is modified to Phosphoserine. Threonine 1501 bears the Phosphothreonine mark. A Phosphoserine modification is found at serine 1514. Threonine 1517 carries the phosphothreonine modification. Phosphoserine occurs at positions 1542, 1554, 1574, 1600, 1603, 1714, and 1726. Phosphothreonine occurs at positions 1730 and 1736. Serine 1739 is subject to Phosphoserine.

The protein belongs to the TRAFAC class myosin-kinesin ATPase superfamily. Myosin family. As to quaternary structure, muscle myosin is a hexameric protein that consists of 2 heavy chain subunits (MHC), 2 alkali light chain subunits (MLC) and 2 regulatory light chain subunits (MLC-2). Interacts with SLC26A5.

The protein resides in the cytoplasm. It localises to the myofibril. Its function is as follows. Required for normal hearing. It plays a role in cochlear amplification of auditory stimuli, likely through the positive regulation of prestin (SLC26A5) activity and outer hair cell (OHC) electromotility. The protein is Myosin-1 (MYH1) of Sus scrofa (Pig).